A 412-amino-acid polypeptide reads, in one-letter code: WW domain-containing oxidoreductase (412 aa).

The interval 1–24 (MAALKYAGMEDTDSEDELPPGWEE) is disordered. The WW 1 domain occupies 16–49 (DELPPGWEERSTKDGWVYYANHEEMKTQWEHPKT). The Nuclear localization signal signature appears at 50 to 55 (GKKKRC). Residues 57-90 (GALPYGWEQETDDKGQIFYVDHINKRKTYFDPRQ) form the WW 2 domain. 128–134 (GANSGIG) serves as a coordination point for NADP(+). Serine 257 provides a ligand contact to substrate. The active-site Proton acceptor is tyrosine 290.

The protein belongs to the short-chain dehydrogenases/reductases (SDR) family.

It localises to the cytoplasm. It is found in the mitochondrion. Its subcellular location is the golgi apparatus. The protein resides in the lysosome. Putative oxidoreductase. Acts as a tumor suppressor and plays a role in apoptosis. May function synergistically with p53/TP53 to control genotoxic stress-induced cell death. Plays a role in TGFB1 signaling and TGFB1-mediated cell death. May also play a role in tumor necrosis factor (TNF)-mediated cell death. Required for normal bone development. Inhibits Wnt signaling. In Danio rerio (Zebrafish), this protein is WW domain-containing oxidoreductase (wwox).